The chain runs to 222 residues: Phosphoribosylformylglycinamidine synthase subunit PurQ (222 aa).

The Glutamine amidotransferase type-1 domain occupies 3 to 222; the sequence is SAVIQLPGLN…LFESVLGRAA (220 aa). The Nucleophile role is filled by cysteine 86. Active-site residues include histidine 196 and glutamate 198.

In terms of assembly, part of the FGAM synthase complex composed of 1 PurL, 1 PurQ and 2 PurS subunits.

Its subcellular location is the cytoplasm. It catalyses the reaction N(2)-formyl-N(1)-(5-phospho-beta-D-ribosyl)glycinamide + L-glutamine + ATP + H2O = 2-formamido-N(1)-(5-O-phospho-beta-D-ribosyl)acetamidine + L-glutamate + ADP + phosphate + H(+). The catalysed reaction is L-glutamine + H2O = L-glutamate + NH4(+). It functions in the pathway purine metabolism; IMP biosynthesis via de novo pathway; 5-amino-1-(5-phospho-D-ribosyl)imidazole from N(2)-formyl-N(1)-(5-phospho-D-ribosyl)glycinamide: step 1/2. Part of the phosphoribosylformylglycinamidine synthase complex involved in the purines biosynthetic pathway. Catalyzes the ATP-dependent conversion of formylglycinamide ribonucleotide (FGAR) and glutamine to yield formylglycinamidine ribonucleotide (FGAM) and glutamate. The FGAM synthase complex is composed of three subunits. PurQ produces an ammonia molecule by converting glutamine to glutamate. PurL transfers the ammonia molecule to FGAR to form FGAM in an ATP-dependent manner. PurS interacts with PurQ and PurL and is thought to assist in the transfer of the ammonia molecule from PurQ to PurL. The chain is Phosphoribosylformylglycinamidine synthase subunit PurQ from Chelativorans sp. (strain BNC1).